A 440-amino-acid polypeptide reads, in one-letter code: Ribosomal protein uS12 methylthiotransferase RimO (440 aa).

One can recognise an MTTase N-terminal domain in the interval 7-117; sequence PKISFVSLGC…VLDAVHRALP (111 aa). C16, C52, C81, C148, C152, and C155 together coordinate [4Fe-4S] cluster. Positions 134-370 constitute a Radical SAM core domain; the sequence is LTPRHYAYLK…MARQQKISAQ (237 aa). In terms of domain architecture, TRAM spans 373–439; it reads KRKVGTRQQV…EYDLHGSVAG (67 aa).

Belongs to the methylthiotransferase family. RimO subfamily. It depends on [4Fe-4S] cluster as a cofactor.

The protein resides in the cytoplasm. It carries out the reaction L-aspartate(89)-[ribosomal protein uS12]-hydrogen + (sulfur carrier)-SH + AH2 + 2 S-adenosyl-L-methionine = 3-methylsulfanyl-L-aspartate(89)-[ribosomal protein uS12]-hydrogen + (sulfur carrier)-H + 5'-deoxyadenosine + L-methionine + A + S-adenosyl-L-homocysteine + 2 H(+). Its function is as follows. Catalyzes the methylthiolation of an aspartic acid residue of ribosomal protein uS12. This chain is Ribosomal protein uS12 methylthiotransferase RimO, found in Afipia carboxidovorans (strain ATCC 49405 / DSM 1227 / KCTC 32145 / OM5) (Oligotropha carboxidovorans).